Here is a 239-residue protein sequence, read N- to C-terminus: Pyridoxine 5'-phosphate synthase (239 aa).

Position 7 (asparagine 7) interacts with 3-amino-2-oxopropyl phosphate. 9–10 (DH) serves as a coordination point for 1-deoxy-D-xylulose 5-phosphate. Arginine 18 contacts 3-amino-2-oxopropyl phosphate. Histidine 43 functions as the Proton acceptor in the catalytic mechanism. 1-deoxy-D-xylulose 5-phosphate-binding residues include arginine 45 and histidine 50. Glutamate 70 acts as the Proton acceptor in catalysis. Threonine 100 contacts 1-deoxy-D-xylulose 5-phosphate. Residue histidine 191 is the Proton donor of the active site. Residues glycine 192 and 213–214 (GH) contribute to the 3-amino-2-oxopropyl phosphate site.

The protein belongs to the PNP synthase family. In terms of assembly, homooctamer; tetramer of dimers.

The protein resides in the cytoplasm. The catalysed reaction is 3-amino-2-oxopropyl phosphate + 1-deoxy-D-xylulose 5-phosphate = pyridoxine 5'-phosphate + phosphate + 2 H2O + H(+). It functions in the pathway cofactor biosynthesis; pyridoxine 5'-phosphate biosynthesis; pyridoxine 5'-phosphate from D-erythrose 4-phosphate: step 5/5. Functionally, catalyzes the complicated ring closure reaction between the two acyclic compounds 1-deoxy-D-xylulose-5-phosphate (DXP) and 3-amino-2-oxopropyl phosphate (1-amino-acetone-3-phosphate or AAP) to form pyridoxine 5'-phosphate (PNP) and inorganic phosphate. This is Pyridoxine 5'-phosphate synthase from Syntrophotalea carbinolica (strain DSM 2380 / NBRC 103641 / GraBd1) (Pelobacter carbinolicus).